The sequence spans 294 residues: MFQGVYTAIITPFKNDKIDYDSYNKLLEKQIKAGVNGVVPCGTTGESPTLSHTEHAELIRETVKAVQGKIQVVAGTGSNSTREAIELTEAACKDSVDGILSVNPYYNKPTQEGLFQHFQAVAEHSSVPVMLYNIPGRTSINLQPETVFRLSEIKRIRSMKEATGDLGQMGKLISLVGNKMTVLSGDDNLTLPLLAIGGVGVVSVVSNLFPKAMVEMVKYFQDGRVIEARKIHYDFIEAFALAFMETNPIPIKAAMSWFGHCEPEIRLPLTRLSQNETSVKFKKALEVLKEKGYE.

Threonine 44 is a binding site for pyruvate. The Proton donor/acceptor role is filled by tyrosine 132. Lysine 160 acts as the Schiff-base intermediate with substrate in catalysis. Valine 202 is a binding site for pyruvate.

The protein belongs to the DapA family. In terms of assembly, homotetramer; dimer of dimers.

It is found in the cytoplasm. It catalyses the reaction L-aspartate 4-semialdehyde + pyruvate = (2S,4S)-4-hydroxy-2,3,4,5-tetrahydrodipicolinate + H2O + H(+). It participates in amino-acid biosynthesis; L-lysine biosynthesis via DAP pathway; (S)-tetrahydrodipicolinate from L-aspartate: step 3/4. Functionally, catalyzes the condensation of (S)-aspartate-beta-semialdehyde [(S)-ASA] and pyruvate to 4-hydroxy-tetrahydrodipicolinate (HTPA). In Leptospira borgpetersenii serovar Hardjo-bovis (strain L550), this protein is 4-hydroxy-tetrahydrodipicolinate synthase.